The sequence spans 526 residues: Cytochrome P450 monooxygenase 226 (526 aa).

Residues 15 to 35 traverse the membrane as a helical segment; sequence FATSYAALTVAAVTLLAALLV. Residues N219, N277, and N320 are each glycosylated (N-linked (GlcNAc...) asparagine). C452 contacts heme.

Belongs to the cytochrome P450 family. Heme serves as cofactor.

It localises to the membrane. It functions in the pathway secondary metabolite biosynthesis. In terms of biological role, cytochrome P450 monooxygenase that is able to use anthracene, carbazole and phenanthrene as substrates for oxidation. These multifunctional properties against a series of polycyclic aromatic hydrocarbons (PAHs) suggest that CYP226 would play important roles, at least in part, in fungal metabolic systems involved in xenobiotic detoxification. The sequence is that of Cytochrome P450 monooxygenase 226 from Postia placenta (strain ATCC 44394 / Madison 698-R) (Brown rot fungus).